A 101-amino-acid chain; its full sequence is NAD(P)H-quinone oxidoreductase subunit 4L, chloroplastic (101 aa).

3 helical membrane passes run 2–22, 32–52, and 61–81; these read ILEH…YGLI, MCLE…SDFF, and IFCI…LAIV.

Belongs to the complex I subunit 4L family. In terms of assembly, NDH is composed of at least 16 different subunits, 5 of which are encoded in the nucleus.

It is found in the plastid. Its subcellular location is the chloroplast thylakoid membrane. It carries out the reaction a plastoquinone + NADH + (n+1) H(+)(in) = a plastoquinol + NAD(+) + n H(+)(out). It catalyses the reaction a plastoquinone + NADPH + (n+1) H(+)(in) = a plastoquinol + NADP(+) + n H(+)(out). In terms of biological role, NDH shuttles electrons from NAD(P)H:plastoquinone, via FMN and iron-sulfur (Fe-S) centers, to quinones in the photosynthetic chain and possibly in a chloroplast respiratory chain. The immediate electron acceptor for the enzyme in this species is believed to be plastoquinone. Couples the redox reaction to proton translocation, and thus conserves the redox energy in a proton gradient. This is NAD(P)H-quinone oxidoreductase subunit 4L, chloroplastic from Arabidopsis thaliana (Mouse-ear cress).